The sequence spans 489 residues: Amino acid transporter AVT6E (489 aa).

The next 11 membrane-spanning stretches (helical) occupy residues 76-96 (GIYG…IMAL), 102-122 (VLGL…SEIS), 156-176 (ICII…MGDV), 201-221 (VLIL…NKID), 227-247 (SAAS…VATI), 269-289 (ILDL…HFNV), 310-330 (ITTA…YLLF), 357-377 (IVRI…HFSL), 404-424 (VVLL…WTAF), 425-445 (KFTG…LIAL), and 461-481 (VSWL…IGNI).

It belongs to the amino acid/polyamine transporter 2 family. Amino acid/auxin permease (AAAP) (TC 2.A.18.6) subfamily.

It localises to the endoplasmic reticulum membrane. Its subcellular location is the vacuole membrane. This chain is Amino acid transporter AVT6E, found in Arabidopsis thaliana (Mouse-ear cress).